We begin with the raw amino-acid sequence, 896 residues long: Pentatricopeptide repeat-containing protein At5g03800 (896 aa).

PPR repeat units follow at residues 113–143 (KTRLGNALISTYLKLGFPREAILVFVSLSSP), 144–178 (TVVSYTALISGFSRLNLEIEALKVFFRMRKAGLVQ), 180–214 (NEYTFVAILTACVRVSRFSLGIQIHGLIVKSGFLN), 215–247 (SVFVSNSLMSLYDKDSGSSCDDVLKLFDEIPQR), 248–278 (DVASWNTVVSSLVKEGKSHKAFDLFYEMNRV), 284–318 (DSFTLSTLLSSCTDSSVLLRGRELHGRAIRIGLMQ), 319–349 (ELSVNNALIGFYSKFWDMKKVESLYEMMMAQ), 350–380 (DAVTFTEMITAYMSFGMVDSAVEIFANVTEK), 381–415 (NTITYNALMAGFCRNGHGLKALKLFTDMLQRGVEL), 416–450 (TDFSLTSAVDACGLVSEKKVSEQIHGFCIKFGTAF), 451–481 (NPCIQTALLDMCTRCERMADAEEMFDQWPSN), 484–519 (SSKATTSIIGGYARNGLPDKAVSLFHRTLCEQKLFL), 520–554 (DEVSLTLILAVCGTLGFREMGYQIHCYALKAGYFS), 555–585 (DISLGNSLISMYAKCCDSDDAIKIFNTMREH), 586–620 (DVISWNSLISCYILQRNGDEALALWSRMNEKEIKP), 621–653 (DIITLTLVISAFRYTESNKLSSCRDLFLSMKTI), and 659–689 (TTEHYTAFVRVLGHWGLLEEAEDTINSMPVQ). The interval 694–769 (VLRALLDSCR…HPAKSWIIHE (76 aa)) is type E motif. The tract at residues 770–800 (NKIHSFHARDTSHPQEKDIYRGLEILIMECL) is type E(+) motif. A type DYW motif region spans residues 801–896 (KVGYEPNTEY…NGKCSCRDLW (96 aa)).

The protein belongs to the PPR family. PCMP-H subfamily.

In terms of biological role, may play a role in embryogenesis. This Arabidopsis thaliana (Mouse-ear cress) protein is Pentatricopeptide repeat-containing protein At5g03800 (EMB175).